The primary structure comprises 559 residues: Thermosome subunit alpha (559 aa).

The segment covering 536 to 552 (SGEKKGEKKEGGEEEKS) has biased composition (basic and acidic residues). The interval 536-559 (SGEKKGEKKEGGEEEKSSTPSSLE) is disordered.

The protein belongs to the TCP-1 chaperonin family. Forms a Heterooligomeric complex of two stacked nine-membered rings; one of alpha and the other of beta subunits.

In terms of biological role, molecular chaperone; binds unfolded polypeptides in vitro, and has a weak ATPase activity. The polypeptide is Thermosome subunit alpha (thsA) (Sulfurisphaera tokodaii (strain DSM 16993 / JCM 10545 / NBRC 100140 / 7) (Sulfolobus tokodaii)).